The sequence spans 121 residues: Large ribosomal subunit protein uL14 (121 aa).

It belongs to the universal ribosomal protein uL14 family. As to quaternary structure, part of the 50S ribosomal subunit. Forms a cluster with proteins L3 and L19. In the 70S ribosome, L14 and L19 interact and together make contacts with the 16S rRNA in bridges B5 and B8.

In terms of biological role, binds to 23S rRNA. Forms part of two intersubunit bridges in the 70S ribosome. The sequence is that of Large ribosomal subunit protein uL14 from Hydrogenobaculum sp. (strain Y04AAS1).